Reading from the N-terminus, the 329-residue chain is ADP-L-glycero-D-manno-heptose-6-epimerase (329 aa).

NADP(+)-binding positions include 10–11 (FI), 31–32 (DD), Lys38, Lys53, 74–78 (QGACS), and Asn91. The Proton acceptor role is filled by Tyr138. Lys142 serves as a coordination point for NADP(+). Residue Asn167 participates in substrate binding. The NADP(+) site is built by Val168 and Lys176. The active-site Proton acceptor is the Lys176. Substrate contacts are provided by residues Arg178, His185, 199-202 (FAGW), Arg212, and Tyr291.

This sequence belongs to the NAD(P)-dependent epimerase/dehydratase family. HldD subfamily. As to quaternary structure, homopentamer. It depends on NADP(+) as a cofactor.

The enzyme catalyses ADP-D-glycero-beta-D-manno-heptose = ADP-L-glycero-beta-D-manno-heptose. The protein operates within nucleotide-sugar biosynthesis; ADP-L-glycero-beta-D-manno-heptose biosynthesis; ADP-L-glycero-beta-D-manno-heptose from D-glycero-beta-D-manno-heptose 7-phosphate: step 4/4. It participates in bacterial outer membrane biogenesis; LPS core biosynthesis. Functionally, catalyzes the interconversion between ADP-D-glycero-beta-D-manno-heptose and ADP-L-glycero-beta-D-manno-heptose via an epimerization at carbon 6 of the heptose. The chain is ADP-L-glycero-D-manno-heptose-6-epimerase from Bordetella pertussis (strain Tohama I / ATCC BAA-589 / NCTC 13251).